Reading from the N-terminus, the 914-residue chain is Solute carrier family 12 member 9 (914 aa).

Residues 1-36 (MASESSPLLAYRLLGEEGAAFPPNGAGVSGVPSSRK) are Cytoplasmic-facing. Ser-6 carries the phosphoserine modification. Residues 37–57 (LSTFLGVVVPTVLSMFSIVVF) traverse the membrane as a helical segment. Residues 58–72 (LRIGFVVGHAGLLQA) lie on the Extracellular side of the membrane. The helical transmembrane segment at 73–93 (LAMLLVAYIILALTVLSVCAI) threads the bilayer. Topologically, residues 94 to 119 (ATNGAVRGGGAYFMISRTLGPEVGGS) are cytoplasmic. A helical transmembrane segment spans residues 120 to 140 (IGLMFYLANVCGCAVSLLGLV). Over 141-167 (ESILDVFGADATGSSGIQVLPQGYGWN) the chain is Extracellular. The chain crosses the membrane as a helical span at residues 168 to 188 (LLYGSLLLGLVGGVCTLGAGL). Topologically, residues 189-193 (YARAS) are cytoplasmic. Residues 194–214 (FLTFLLVSGSLASVLVSFVAV) traverse the membrane as a helical segment. Over 215-262 (GPRNIPLAPRPGTNASSVPHRHGHFTGFNGSTLRDNLGAGYAEDYTTG) the chain is Extracellular. 2 N-linked (GlcNAc...) asparagine glycosylation sites follow: Asn-228 and Asn-243. A helical membrane pass occupies residues 263-283 (AMMTFASVFAVLFNGCTGIMA). Residues 284–297 (GANMSGELKDPSRA) are Cytoplasmic-facing. The chain crosses the membrane as a helical span at residues 298 to 318 (IPLGTIIAVAYTFFIYILLFF). The Extracellular segment spans residues 319-338 (LSSFTCDRALLQEDYGFFRD). Residues 339–359 (ISLWPPLVLIGIYATALSASM) traverse the membrane as a helical segment. At 360-376 (SSLIGASRILHALAQDD) the chain is on the cytoplasmic side. A helical transmembrane segment spans residues 377–399 (LFGVILAPAKVVSGGGNPWGAVL). Residues 400-416 (YSWGLVQLVLLAGKLNT) lie on the Extracellular side of the membrane. The chain crosses the membrane as a helical span at residues 417–437 (LAAVVTVFYLVAYAAVDLSCL). Topologically, residues 438–466 (SLEWASAPNFRPTFSLFSWHTCLLGVASC) are cytoplasmic. A helical membrane pass occupies residues 467–487 (LLMMFLISPGAAGGSLLLMGL). Over 488-740 (LSALLTARGG…LLRPRGGPGY (253 aa)) the chain is Extracellular. The segment at 645–678 (PAFSEPAEGTREGGSPALSTLFPPPRAPGSPRAL) is disordered. The helical transmembrane segment at 741–761 (VDVCGLFLLQMATILSMVPAW) threads the bilayer. The Cytoplasmic segment spans residues 762–914 (HSARLRIFLC…GVTPVTCTDL (153 aa)). A disordered region spans residues 844-864 (QGRGTVGGPGGPEGRDGEEGP).

The protein belongs to the SLC12A transporter family. As to quaternary structure, interacts with SLC12A1.

It localises to the cell membrane. The protein resides in the lysosome membrane. May be an inhibitor of SLC12A1. Seems to correspond to a subunit of a multimeric transport system and thus, additional subunits may be required for its function. May play a role in lysosomal ion flux and osmoregulation. This Mus musculus (Mouse) protein is Solute carrier family 12 member 9 (Slc12a9).